The following is a 139-amino-acid chain: Putative pre-16S rRNA nuclease (139 aa).

The protein belongs to the YqgF nuclease family.

It localises to the cytoplasm. Functionally, could be a nuclease involved in processing of the 5'-end of pre-16S rRNA. The chain is Putative pre-16S rRNA nuclease from Streptococcus uberis (strain ATCC BAA-854 / 0140J).